Here is a 93-residue protein sequence, read N- to C-terminus: Alpha-defensin 3 (93 aa).

A signal peptide spans 1–16 (MKTLVLLSALVLLAFQ). Residues 17-58 (VQADPIQNTDEETKTEEQPGEDDQAVSVSFGDPEGSSLQEES) constitute a propeptide that is removed on maturation. Residues 22–56 (IQNTDEETKTEEQPGEDDQAVSVSFGDPEGSSLQE) are disordered. Intrachain disulfides connect Cys-64-Cys-92, Cys-66-Cys-81, and Cys-71-Cys-91.

This sequence belongs to the alpha-defensin family. In terms of tissue distribution, paneth cells of the small bowel.

Its subcellular location is the secreted. In terms of biological role, probably contributes to the antimicrobial barrier function of the small bowel mucosa. This is Alpha-defensin 3 (Defa3) from Mus musculus (Mouse).